A 201-amino-acid chain; its full sequence is MEKFTTLEGVAAPMRIINIDTDRIIPKQYLKTIKRTGLGQGLFSEMRYNDDGSENPDFVLNQPAYRHAKTLVVGDNFGCGSSREHAPWALADFGIRCVISTSFADIFFNNCAKNGILAIVVSPEDLEKLFQDAERGANATLTIDLAAQTIKGPDGGTLHFDIDEGRKHNLLNGLDEIGLTLDQKAPAIDAYEAKLAQREWA.

The protein belongs to the LeuD family. LeuD type 1 subfamily. As to quaternary structure, heterodimer of LeuC and LeuD.

It carries out the reaction (2R,3S)-3-isopropylmalate = (2S)-2-isopropylmalate. It participates in amino-acid biosynthesis; L-leucine biosynthesis; L-leucine from 3-methyl-2-oxobutanoate: step 2/4. Catalyzes the isomerization between 2-isopropylmalate and 3-isopropylmalate, via the formation of 2-isopropylmaleate. The polypeptide is 3-isopropylmalate dehydratase small subunit (Methylorubrum extorquens (strain CM4 / NCIMB 13688) (Methylobacterium extorquens)).